The primary structure comprises 416 residues: Serine hydroxymethyltransferase (416 aa).

(6S)-5,6,7,8-tetrahydrofolate is bound by residues Leu117 and 121–123; that span reads GHL. At Lys225 the chain carries N6-(pyridoxal phosphate)lysine. (6S)-5,6,7,8-tetrahydrofolate is bound at residue 351–353; sequence SPF.

Belongs to the SHMT family. In terms of assembly, homodimer. Pyridoxal 5'-phosphate serves as cofactor.

The protein localises to the cytoplasm. It carries out the reaction (6R)-5,10-methylene-5,6,7,8-tetrahydrofolate + glycine + H2O = (6S)-5,6,7,8-tetrahydrofolate + L-serine. It participates in one-carbon metabolism; tetrahydrofolate interconversion. Its pathway is amino-acid biosynthesis; glycine biosynthesis; glycine from L-serine: step 1/1. Catalyzes the reversible interconversion of serine and glycine with tetrahydrofolate (THF) serving as the one-carbon carrier. This reaction serves as the major source of one-carbon groups required for the biosynthesis of purines, thymidylate, methionine, and other important biomolecules. Also exhibits THF-independent aldolase activity toward beta-hydroxyamino acids, producing glycine and aldehydes, via a retro-aldol mechanism. The chain is Serine hydroxymethyltransferase from Blochmanniella pennsylvanica (strain BPEN).